The following is a 358-amino-acid chain: tRNA-specific 2-thiouridylase MnmA (358 aa).

ATP-binding positions include 6 to 13 (AMSGGVDS) and Leu32. Residue Cys101 is the Nucleophile of the active site. A disulfide bridge connects residues Cys101 and Cys193. Gly125 contributes to the ATP binding site. The interval 143–145 (KDQ) is interaction with tRNA. Cys193 acts as the Cysteine persulfide intermediate in catalysis.

It belongs to the MnmA/TRMU family.

It is found in the cytoplasm. The catalysed reaction is S-sulfanyl-L-cysteinyl-[protein] + uridine(34) in tRNA + AH2 + ATP = 2-thiouridine(34) in tRNA + L-cysteinyl-[protein] + A + AMP + diphosphate + H(+). Functionally, catalyzes the 2-thiolation of uridine at the wobble position (U34) of tRNA, leading to the formation of s(2)U34. The protein is tRNA-specific 2-thiouridylase MnmA of Mycolicibacterium paratuberculosis (strain ATCC BAA-968 / K-10) (Mycobacterium paratuberculosis).